Here is a 95-residue protein sequence, read N- to C-terminus: Large ribosomal subunit protein uL22c (95 aa).

This sequence belongs to the universal ribosomal protein uL22 family. As to quaternary structure, part of the 50S ribosomal subunit.

It localises to the plastid. The protein localises to the chloroplast. In terms of biological role, this protein binds specifically to 23S rRNA. Functionally, the globular domain of the protein is located near the polypeptide exit tunnel on the outside of the subunit, while an extended beta-hairpin is found that lines the wall of the exit tunnel in the center of the 70S ribosome. In Cyanidioschyzon merolae (strain NIES-3377 / 10D) (Unicellular red alga), this protein is Large ribosomal subunit protein uL22c (rpl22).